The sequence spans 186 residues: Probable RNA 2'-phosphotransferase (186 aa).

It belongs to the KptA/TPT1 family.

Its function is as follows. Removes the 2'-phosphate from RNA via an intermediate in which the phosphate is ADP-ribosylated by NAD followed by a presumed transesterification to release the RNA and generate ADP-ribose 1''-2''-cyclic phosphate (APPR&gt;P). May function as an ADP-ribosylase. This is Probable RNA 2'-phosphotransferase from Hahella chejuensis (strain KCTC 2396).